The primary structure comprises 87 residues: Histone H1.C6/H1.C9 (87 aa).

Residues 1 to 87 (MSDAAVPPKK…KKAVKKAPKK (87 aa)) form a disordered region. Residues 11-87 (ASPKKASPKK…KKAVKKAPKK (77 aa)) show a composition bias toward basic residues.

It localises to the nucleus. Its subcellular location is the chromosome. In Trypanosoma cruzi, this protein is Histone H1.C6/H1.C9.